The chain runs to 332 residues: Nucleoid-associated protein VIBHAR_03026 (332 aa).

It belongs to the YejK family.

Its subcellular location is the cytoplasm. It is found in the nucleoid. This chain is Nucleoid-associated protein VIBHAR_03026, found in Vibrio campbellii (strain ATCC BAA-1116).